Consider the following 142-residue polypeptide: Large ribosomal subunit protein bL17 (142 aa).

Belongs to the bacterial ribosomal protein bL17 family. In terms of assembly, part of the 50S ribosomal subunit. Contacts protein L32.

This is Large ribosomal subunit protein bL17 from Rickettsia bellii (strain OSU 85-389).